The sequence spans 525 residues: Ribonuclease Y (525 aa).

The chain crosses the membrane as a helical span at residues 3 to 23; it reads IFFISLVLIVLASVVFFVGGF. The region spanning 215–300 is the KH domain; the sequence is ALSVVHIQSD…KAYEDAKKEI (86 aa). The region spanning 341–433 is the HD domain; sequence LLQHSREVAM…VDAANVISLS (93 aa).

It belongs to the RNase Y family.

It is found in the cell membrane. In terms of biological role, endoribonuclease that initiates mRNA decay. The sequence is that of Ribonuclease Y from Chlorobium phaeobacteroides (strain DSM 266 / SMG 266 / 2430).